The chain runs to 2328 residues: Reducing polyketide synthase Preu2 (2328 aa).

The region spanning M1–S259 is the Ketosynthase family 3 (KS3) domain. Residues I376–S696 form a malonyl-CoA:ACP transacylase (MAT) domain region. The tract at residues N766–D899 is N-terminal hotdog fold. Residues N766–T1057 are dehydratase (DH) domain. The 294-residue stretch at N766 to E1059 folds into the PKS/mFAS DH domain. Residue H798 is the Proton acceptor; for dehydratase activity of the active site. A C-terminal hotdog fold region spans residues L914–E1059. D969 (proton donor; for dehydratase activity) is an active-site residue. The methyltransferase (MT) domain stretch occupies residues D1198–D1419. The tract at residues C1932 to V2111 is ketoreductase (KR)domain. A Carrier domain is found at S2231–L2309. S2269 is subject to O-(pantetheine 4'-phosphoryl)serine.

The cofactor is pantetheine 4'-phosphate.

Its function is as follows. Reducing polyketide synthase; part of a gene cluster that mediates the biosynthesis of a yet unidentified natural product. The sequence is that of Reducing polyketide synthase Preu2 from Preussia isomera (Coprophilous fungus).